Here is a 470-residue protein sequence, read N- to C-terminus: Shutoff alkaline exonuclease (470 aa).

The protein belongs to the herpesviridae alkaline nuclease family. Forms a complex with the DNA polymerase, the DNA polymerase processivity factor, and the major DNA binding protein.

The protein localises to the host nucleus. It localises to the host cytoplasm. In terms of biological role, plays a role in processing non linear or branched viral DNA intermediates in order to promote the production of mature packaged unit-length linear progeny viral DNA molecules. Exhibits endonuclease and exonuclease activities and accepts both double-stranded and single-stranded DNA as substrate. Exonuclease digestion of DNA is in the 5'-&gt; 3' direction and the products are 5'-monophosphate nucleosides. Additionally, forms a recombinase with the major DNA-binding protein, which displays strand exchange activity. Also acts as a cytoplasmic RNA endonuclease that induces degradation of the majority of the cellular messenger RNAs during early lytic infection. The resulting inhibition of cellular protein synthesis serves to ensure maximal viral gene expression and evasion from host immune response. Internally cleaves host mRNAs which are then degraded by the cellular exonuclease XRN1. Bypasses therefore the regulatory steps of deadenylation and decapping normally required for XRN1 activation. In Epstein-Barr virus (strain GD1) (HHV-4), this protein is Shutoff alkaline exonuclease.